The primary structure comprises 312 residues: Malate dehydrogenase (312 aa).

NAD(+) contacts are provided by residues 7 to 13 (GAAGGIG) and Asp-34. Substrate is bound by residues Arg-81 and Arg-87. NAD(+)-binding positions include Asn-94 and 117–119 (ITN). The substrate site is built by Asn-119 and Arg-153. The active-site Proton acceptor is the His-177. Met-227 serves as a coordination point for NAD(+).

Belongs to the LDH/MDH superfamily. MDH type 1 family. Homodimer.

It catalyses the reaction (S)-malate + NAD(+) = oxaloacetate + NADH + H(+). Its function is as follows. Catalyzes the reversible oxidation of malate to oxaloacetate. The polypeptide is Malate dehydrogenase (Escherichia coli O7:K1 (strain IAI39 / ExPEC)).